Reading from the N-terminus, the 574-residue chain is Septation ring formation regulator EzrA (574 aa).

Residues 1-7 (MSSGIIL) lie on the Extracellular side of the membrane. Residues 8-26 (LIVAIVLLVIIAYLVGVII) form a helical membrane-spanning segment. At 27–574 (RKRNDSLITS…YEKTREHIRF (548 aa)) the chain is on the cytoplasmic side. 3 coiled-coil regions span residues 102 to 141 (NFIRAKHEINSVESQLNLVEEDIASIREALNILKEQEEKN), 274 to 350 (ELVT…ETES), and 459 to 520 (QLEA…SFEA).

The protein belongs to the EzrA family.

It is found in the cell membrane. Negative regulator of FtsZ ring formation; modulates the frequency and position of FtsZ ring formation. Inhibits FtsZ ring formation at polar sites. Interacts either with FtsZ or with one of its binding partners to promote depolymerization. The polypeptide is Septation ring formation regulator EzrA (Streptococcus pyogenes serotype M1).